We begin with the raw amino-acid sequence, 268 residues long: Interleukin-2 receptor subunit alpha (268 aa).

An N-terminal signal peptide occupies residues 1–21; it reads MEPRLLMLGFLSLTIVPSCRA. A Sushi 1 domain is found at 22–79; the sequence is ELCLYDPPEVPNATFKALSYKNGTILNCECKRGFRRLKELVYMRCLGNSWSSNCQCTS. Residues 22–236 are Extracellular-facing; that stretch reads ELCLYDPPEV…ETFVLTMEYK (215 aa). Disulfide bonds link cysteine 24-cysteine 66, cysteine 49-cysteine 75, and cysteine 51-cysteine 77. N-linked (GlcNAc...) asparagine glycans are attached at residues asparagine 33 and asparagine 43. The interval 86 to 109 is disordered; it reads RKQVTAQLEHQKEQQTTTDMQKPT. Residues 88–109 show a composition bias toward polar residues; the sequence is QVTAQLEHQKEQQTTTDMQKPT. Asparagine 116 carries an N-linked (GlcNAc...) asparagine glycan. A Sushi 2 domain is found at 119–182; sequence GHCREPPPWK…WTQPQLTCVD (64 aa). 2 disulfides stabilise this stretch: cysteine 121–cysteine 164 and cysteine 148–cysteine 180. Residues 189–219 are disordered; that stretch reads FLASEESQGSRNSSPESETSCPITTTDFPQP. Polar residues predominate over residues 193 to 211; sequence EESQGSRNSSPESETSCPI. A helical membrane pass occupies residues 237–257; the sequence is VAVASCLFLLISILLLSGLTW. Topologically, residues 258–268 are cytoplasmic; sequence QHRWRKSRRTI.

In terms of assembly, non-covalent dimer of an alpha and a beta subunit. IL2R exists in 3 different forms: a high affinity dimer, an intermediate affinity monomer (beta subunit), and a low affinity monomer (alpha subunit). The high and intermediate affinity forms also associate with a gamma subunit.

It localises to the membrane. Receptor for interleukin-2. The receptor is involved in the regulation of immune tolerance by controlling regulatory T cells (TREGs) activity. TREGs suppress the activation and expansion of autoreactive T-cells. The polypeptide is Interleukin-2 receptor subunit alpha (Il2ra) (Mus musculus (Mouse)).